The following is an 893-amino-acid chain: Desmocollin-1 (893 aa).

The N-terminal stretch at 1-29 (MAVASAAPGSIFWKQLLFSLLVLILFCDA) is a signal peptide. The propeptide occupies 30–132 (CQKISLQVPS…KDAVLRRTKR (103 aa)). Cadherin domains lie at 133–240 (RWAP…APYF), 241–352 (ENKL…APYF), 353–470 (TETS…GPEC), 471–574 (QPPV…DHPP), and 575–682 (QIKQ…LSRE). The Extracellular segment spans residues 133–692 (RWAPIPCSLM…AALANVFLGK (560 aa)). N163 carries an N-linked (GlcNAc...) asparagine glycan. Residue T383 is modified to Phosphothreonine. N398 and N545 each carry an N-linked (GlcNAc...) asparagine glycan. The helical transmembrane segment at 693 to 715 (WAILAMVLGSVLLLCILFTCFCV) threads the bilayer. Over 716–893 (TVKKTVKKCF…RTLAKTCVKK (178 aa)) the chain is Cytoplasmic.

Binds to JUP/plakoglobin. Isoform 1A is phosphorylated on a serine but isoform 1B is not. As to expression, epidermis and weakly in tongue papillae.

The protein resides in the cell membrane. Its subcellular location is the cell junction. It localises to the desmosome. In terms of biological role, a component of desmosome cell-cell junctions which are required for positive regulation of cellular adhesion. Required for desmosome adhesion strength between the granular layers of the epidermis, as a result moderates epidermal proliferation and differentiation. Is therefore required to maintain postnatal epidermal barrier function and normal hair follicle morphology into adulthood. In Bos taurus (Bovine), this protein is Desmocollin-1 (DSC1).